Here is a 229-residue protein sequence, read N- to C-terminus: Putative N-acetylmannosamine-6-phosphate 2-epimerase 2 (229 aa).

The protein belongs to the NanE family.

The catalysed reaction is an N-acyl-D-glucosamine 6-phosphate = an N-acyl-D-mannosamine 6-phosphate. It participates in amino-sugar metabolism; N-acetylneuraminate degradation; D-fructose 6-phosphate from N-acetylneuraminate: step 3/5. Its function is as follows. Converts N-acetylmannosamine-6-phosphate (ManNAc-6-P) to N-acetylglucosamine-6-phosphate (GlcNAc-6-P). The protein is Putative N-acetylmannosamine-6-phosphate 2-epimerase 2 of Salmonella paratyphi A (strain ATCC 9150 / SARB42).